The chain runs to 391 residues: ATP phosphoribosyltransferase regulatory subunit (391 aa).

It belongs to the class-II aminoacyl-tRNA synthetase family. HisZ subfamily. Heteromultimer composed of HisG and HisZ subunits.

Its subcellular location is the cytoplasm. The protein operates within amino-acid biosynthesis; L-histidine biosynthesis; L-histidine from 5-phospho-alpha-D-ribose 1-diphosphate: step 1/9. Functionally, required for the first step of histidine biosynthesis. May allow the feedback regulation of ATP phosphoribosyltransferase activity by histidine. This chain is ATP phosphoribosyltransferase regulatory subunit, found in Prochlorococcus marinus (strain NATL2A).